The sequence spans 555 residues: Dihydroxy-acid dehydratase (555 aa).

Residue Asp80 participates in Mg(2+) binding. Cys121 lines the [2Fe-2S] cluster pocket. The Mg(2+) site is built by Asp122 and Lys123. The residue at position 123 (Lys123) is an N6-carboxylysine. Cys193 provides a ligand contact to [2Fe-2S] cluster. Residue Glu444 participates in Mg(2+) binding. Ser470 functions as the Proton acceptor in the catalytic mechanism.

It belongs to the IlvD/Edd family. In terms of assembly, homodimer. The cofactor is [2Fe-2S] cluster. It depends on Mg(2+) as a cofactor.

The enzyme catalyses (2R)-2,3-dihydroxy-3-methylbutanoate = 3-methyl-2-oxobutanoate + H2O. It carries out the reaction (2R,3R)-2,3-dihydroxy-3-methylpentanoate = (S)-3-methyl-2-oxopentanoate + H2O. It participates in amino-acid biosynthesis; L-isoleucine biosynthesis; L-isoleucine from 2-oxobutanoate: step 3/4. The protein operates within amino-acid biosynthesis; L-valine biosynthesis; L-valine from pyruvate: step 3/4. Its function is as follows. Functions in the biosynthesis of branched-chain amino acids. Catalyzes the dehydration of (2R,3R)-2,3-dihydroxy-3-methylpentanoate (2,3-dihydroxy-3-methylvalerate) into 2-oxo-3-methylpentanoate (2-oxo-3-methylvalerate) and of (2R)-2,3-dihydroxy-3-methylbutanoate (2,3-dihydroxyisovalerate) into 2-oxo-3-methylbutanoate (2-oxoisovalerate), the penultimate precursor to L-isoleucine and L-valine, respectively. The chain is Dihydroxy-acid dehydratase from Aquifex aeolicus (strain VF5).